The sequence spans 471 residues: DnaJ protein P58IPK homolog B (471 aa).

The first 24 residues, 1 to 24 (MARWPWRWRVLLPLLLLHSSPVFA), serve as a signal peptide directing secretion. TPR repeat units follow at residues 32–65 (PSTL…DPNH), 66–99 (SEAY…KPGS), 112–146 (AQNA…SPNC), 148–180 (KAKL…DEDN), 181–214 (LDAL…DPEH), 227–260 (LLKK…DPDH), 265–298 (VHLY…DGEL), and 300–332 (DALT…SPQD). Asn-64 carries N-linked (GlcNAc...) asparagine glycosylation. Positions 353-419 (DWYKILGISK…DKRVRYDRGE (67 aa)) constitute a J domain.

Interacts with BIP1.

Its subcellular location is the endoplasmic reticulum lumen. Its function is as follows. May play a role in protein folding in the endoplasmic reticulum. In Oryza sativa subsp. japonica (Rice), this protein is DnaJ protein P58IPK homolog B.